The sequence spans 224 residues: Protein DEHYDRATION-INDUCED 19 homolog 4 (224 aa).

The span at 1–12 (MDSNWINCPSVF) shows a compositional bias: polar residues. Positions 1 to 23 (MDSNWINCPSVFSSSSSSSRRCQ) are disordered. The segment covering 13 to 23 (SSSSSSSRRCQ) has biased composition (low complexity). Threonine 117 is subject to Phosphothreonine.

It belongs to the Di19 family. Phosphorylated in vitro by CPK3 or CPK11. Expressed in seedlings, roots, leaves, stems, flowers and siliques.

The protein resides in the cytoplasm. Its subcellular location is the perinuclear region. This is Protein DEHYDRATION-INDUCED 19 homolog 4 (DI19-4) from Arabidopsis thaliana (Mouse-ear cress).